We begin with the raw amino-acid sequence, 387 residues long: Solute carrier family 25 protein Shawn (387 aa).

Solcar repeat units follow at residues 37–156 (IRPL…FKAR), 179–263 (IPFL…LKSS), and 269–366 (PTFS…GKSF). The next 6 membrane-spanning stretches (helical) occupy residues 43–63 (VASA…LDVI), 128–148 (LWSG…IYFV), 179–199 (IPFL…VTCV), 235–255 (LWRG…IYWT), 275–295 (FAAG…FDVV), and 337–357 (AIFS…AIMI).

It belongs to the mitochondrial carrier (TC 2.A.29) family.

It is found in the mitochondrion inner membrane. Mitochondrial transporter required for glutathione import into mitochondria. The chain is Solute carrier family 25 protein Shawn from Drosophila melanogaster (Fruit fly).